Consider the following 357-residue polypeptide: Probable cinnamyl alcohol dehydrogenase 1 (357 aa).

C47 is a Zn(2+) binding site. Residue T49 coordinates NADP(+). 7 residues coordinate Zn(2+): H69, E70, C100, C103, C106, C114, and C163. NADP(+)-binding positions include T167, 188 to 193 (GLGGVG), 211 to 216 (SSSNKK), T251, G275, and 298 to 300 (SFI).

Belongs to the zinc-containing alcohol dehydrogenase family. Homodimer. Zn(2+) serves as cofactor. Post-translationally, the N-terminus is blocked.

The catalysed reaction is (E)-cinnamyl alcohol + NADP(+) = (E)-cinnamaldehyde + NADPH + H(+). It catalyses the reaction (E)-coniferol + NADP(+) = (E)-coniferaldehyde + NADPH + H(+). It carries out the reaction (E)-sinapyl alcohol + NADP(+) = (E)-sinapaldehyde + NADPH + H(+). The enzyme catalyses (E)-4-coumaroyl alcohol + NADP(+) = (E)-4-coumaraldehyde + NADPH + H(+). The catalysed reaction is (E)-caffeyl alcohol + NADP(+) = (E)-caffeyl aldehyde + NADPH + H(+). It functions in the pathway aromatic compound metabolism; phenylpropanoid biosynthesis. Functionally, involved in lignin biosynthesis. Catalyzes the final step specific for the production of lignin monomers. Catalyzes the NADPH-dependent reduction of coniferaldehyde, 5-hydroxyconiferaldehyde, sinapaldehyde, 4-coumaraldehyde and caffeyl aldehyde to their respective alcohols. In Nicotiana tabacum (Common tobacco), this protein is Probable cinnamyl alcohol dehydrogenase 1.